The sequence spans 640 residues: MSQPESYPLLSRIGSPSDLRELPAAELPALAGELRAFLLESVSSTGGHLASNLGTVELTIALHYVFNTPDDRLVWDVGHQSYPHKILTGRREAMPGLRKKGGLAGFPKRAESPYDTFGVGHSSTSISAALGMALAARQLGEDRHAVAIIGDGAMTAGMAFEALNHAGDQKANLLVVLNDNEMSISPNVGAMNNYLARLLSGKVYSTVREGSKRVLDHMPPMREFMRRAEEHMKGMIVPGTLFEELGFNYYGPIDGHDLPSLVKTLKNLRALPGPRLLHVVTRKGHGYAPAEQDPCGYHGVGQFDPSQGLAAGKTPSSPSYTQVFGQWLCDMAEADPRLVGITPAMREGSGLVEFSQRFPERYHDVGIAEQHALTVAAGMACDGLKPVVAIYSTFLQRAYDQLIHDIAIQNLPVLLAIDRAGVVGPDGPTHAGSFDLSYLRCVPNLTVMAPADEDECRRMLSTGFHLDGPAAVRYPRGKGPGAALDPGLDTLPVGKAQLRRKGRGVALLAFGAVLPAALAAAEPLDATVVNMRFVKPLDEALVREMAEGHDLLVTLEDNVVAGGAGSAVAESLAVQGITVPLLHLGLPDRFQEHGSREELLSEAGLDAEGILAAVRARLNDVPSRSGRDDCLSAPTRVISK.

Thiamine diphosphate-binding positions include H79 and 120 to 122 (GHS). D151 contributes to the Mg(2+) binding site. Residues 152–153 (GA), N180, Y287, and E369 contribute to the thiamine diphosphate site. N180 contributes to the Mg(2+) binding site.

It belongs to the transketolase family. DXPS subfamily. As to quaternary structure, homodimer. Mg(2+) is required as a cofactor. It depends on thiamine diphosphate as a cofactor.

It carries out the reaction D-glyceraldehyde 3-phosphate + pyruvate + H(+) = 1-deoxy-D-xylulose 5-phosphate + CO2. It participates in metabolic intermediate biosynthesis; 1-deoxy-D-xylulose 5-phosphate biosynthesis; 1-deoxy-D-xylulose 5-phosphate from D-glyceraldehyde 3-phosphate and pyruvate: step 1/1. Its function is as follows. Catalyzes the acyloin condensation reaction between C atoms 2 and 3 of pyruvate and glyceraldehyde 3-phosphate to yield 1-deoxy-D-xylulose-5-phosphate (DXP). The polypeptide is 1-deoxy-D-xylulose-5-phosphate synthase (Thioalkalivibrio sulfidiphilus (strain HL-EbGR7)).